A 121-amino-acid polypeptide reads, in one-letter code: Ribonuclease P protein component (121 aa).

The protein belongs to the RnpA family. In terms of assembly, consists of a catalytic RNA component (M1 or rnpB) and a protein subunit.

The enzyme catalyses Endonucleolytic cleavage of RNA, removing 5'-extranucleotides from tRNA precursor.. RNaseP catalyzes the removal of the 5'-leader sequence from pre-tRNA to produce the mature 5'-terminus. It can also cleave other RNA substrates such as 4.5S RNA. The protein component plays an auxiliary but essential role in vivo by binding to the 5'-leader sequence and broadening the substrate specificity of the ribozyme. This chain is Ribonuclease P protein component, found in Geobacillus thermodenitrificans (strain NG80-2).